A 71-amino-acid chain; its full sequence is Translation initiation factor IF-1 (71 aa).

The S1-like domain occupies 1–71 (MAKQSAIEQD…LSKARITYRY (71 aa)).

Belongs to the IF-1 family. As to quaternary structure, component of the 30S ribosomal translation pre-initiation complex which assembles on the 30S ribosome in the order IF-2 and IF-3, IF-1 and N-formylmethionyl-tRNA(fMet); mRNA recruitment can occur at any time during PIC assembly.

The protein resides in the cytoplasm. In terms of biological role, one of the essential components for the initiation of protein synthesis. Stabilizes the binding of IF-2 and IF-3 on the 30S subunit to which N-formylmethionyl-tRNA(fMet) subsequently binds. Helps modulate mRNA selection, yielding the 30S pre-initiation complex (PIC). Upon addition of the 50S ribosomal subunit IF-1, IF-2 and IF-3 are released leaving the mature 70S translation initiation complex. The protein is Translation initiation factor IF-1 of Flavobacterium johnsoniae (strain ATCC 17061 / DSM 2064 / JCM 8514 / BCRC 14874 / CCUG 350202 / NBRC 14942 / NCIMB 11054 / UW101) (Cytophaga johnsonae).